A 371-amino-acid chain; its full sequence is NADH-ubiquinone oxidoreductase chain 1 (371 aa).

A run of 10 helical transmembrane segments spans residues 7-27 (IISI…VAYV), 44-64 (PNAV…KLLL), 77-97 (LFFL…AVIP), 109-129 (LGIL…LLAG), 153-173 (LVLS…NLGV), 180-200 (AVLF…GSIA), 226-246 (AVVF…MCIL), 263-283 (VFNI…NWMV), 302-322 (GWLY…IFIL), and 338-358 (FCWT…PCIL).

Belongs to the complex I subunit 1 family.

Its subcellular location is the mitochondrion inner membrane. The enzyme catalyses a ubiquinone + NADH + 5 H(+)(in) = a ubiquinol + NAD(+) + 4 H(+)(out). In terms of biological role, core subunit of the mitochondrial membrane respiratory chain NADH dehydrogenase (Complex I) that is believed to belong to the minimal assembly required for catalysis. Complex I functions in the transfer of electrons from NADH to the respiratory chain. The immediate electron acceptor for the enzyme is believed to be ubiquinone. The polypeptide is NADH-ubiquinone oxidoreductase chain 1 (ndh-1) (Neurospora crassa (strain ATCC 24698 / 74-OR23-1A / CBS 708.71 / DSM 1257 / FGSC 987)).